Reading from the N-terminus, the 618-residue chain is Proline--tRNA ligase (618 aa).

It belongs to the class-II aminoacyl-tRNA synthetase family. ProS type 1 subfamily. In terms of assembly, homodimer.

The protein resides in the cytoplasm. The catalysed reaction is tRNA(Pro) + L-proline + ATP = L-prolyl-tRNA(Pro) + AMP + diphosphate. In terms of biological role, catalyzes the attachment of proline to tRNA(Pro) in a two-step reaction: proline is first activated by ATP to form Pro-AMP and then transferred to the acceptor end of tRNA(Pro). As ProRS can inadvertently accommodate and process non-cognate amino acids such as alanine and cysteine, to avoid such errors it has two additional distinct editing activities against alanine. One activity is designated as 'pretransfer' editing and involves the tRNA(Pro)-independent hydrolysis of activated Ala-AMP. The other activity is designated 'posttransfer' editing and involves deacylation of mischarged Ala-tRNA(Pro). The misacylated Cys-tRNA(Pro) is not edited by ProRS. The sequence is that of Proline--tRNA ligase from Streptococcus equi subsp. zooepidemicus (strain H70).